The following is an 803-amino-acid chain: Translation initiation factor IF-2 (803 aa).

2 disordered regions span residues 95 to 125 (PVVE…EKAE) and 138 to 178 (EVKE…EREE). The span at 111–121 (VPLTSDTTNLN) shows a compositional bias: polar residues. Basic and acidic residues predominate over residues 138-155 (EVKEEAKKTPSEKKETPK). Over residues 156-167 (KGPRKETRRSRK) the composition is skewed to basic residues. The span at 168–178 (PDKEDKWEREE) shows a compositional bias: basic and acidic residues. Positions 302-471 (PRAPVVTIMG…LLQAEVLELK (170 aa)) constitute a tr-type G domain. The interval 311 to 318 (GHVDHGKT) is G1. A GTP-binding site is contributed by 311–318 (GHVDHGKT). Residues 336–340 (GITQH) are G2. The tract at residues 357 to 360 (DTPG) is G3. GTP is bound by residues 357–361 (DTPGH) and 411–414 (NKID). A G4 region spans residues 411–414 (NKID). Residues 447–449 (SAK) are G5.

The protein belongs to the TRAFAC class translation factor GTPase superfamily. Classic translation factor GTPase family. IF-2 subfamily.

Its subcellular location is the cytoplasm. In terms of biological role, one of the essential components for the initiation of protein synthesis. Protects formylmethionyl-tRNA from spontaneous hydrolysis and promotes its binding to the 30S ribosomal subunits. Also involved in the hydrolysis of GTP during the formation of the 70S ribosomal complex. This Coxiella burnetii (strain CbuK_Q154) (Coxiella burnetii (strain Q154)) protein is Translation initiation factor IF-2.